Here is a 224-residue protein sequence, read N- to C-terminus: Phosphoglycolate phosphatase (224 aa).

The active-site Nucleophile is Asp8. Mg(2+) contacts are provided by Asp8 and Asp10. Lys151 is a substrate binding site. Mg(2+) is bound by residues Asp174 and Asp178.

It belongs to the archaeal SPP-like hydrolase family. It depends on Mg(2+) as a cofactor.

The catalysed reaction is 2-phosphoglycolate + H2O = glycolate + phosphate. Functionally, catalyzes the dephosphorylation of 2-phosphoglycolate. This Thermoplasma volcanium (strain ATCC 51530 / DSM 4299 / JCM 9571 / NBRC 15438 / GSS1) protein is Phosphoglycolate phosphatase.